A 740-amino-acid chain; its full sequence is Ion-translocating oxidoreductase complex subunit C (740 aa).

4Fe-4S ferredoxin-type domains follow at residues 369–397 (GEPQ…QQLY) and 407–436 (KATT…VQYF). Residues Cys-377, Cys-380, Cys-383, Cys-387, Cys-416, Cys-419, Cys-422, and Cys-426 each contribute to the [4Fe-4S] cluster site. The interval 602–716 (KLEQQQANAE…EPEEQVDPRK (115 aa)) is disordered.

Belongs to the 4Fe4S bacterial-type ferredoxin family. RnfC subfamily. In terms of assembly, the complex is composed of six subunits: RsxA, RsxB, RsxC, RsxD, RsxE and RsxG. [4Fe-4S] cluster serves as cofactor.

The protein resides in the cell inner membrane. Its function is as follows. Part of a membrane-bound complex that couples electron transfer with translocation of ions across the membrane. Required to maintain the reduced state of SoxR. The sequence is that of Ion-translocating oxidoreductase complex subunit C from Escherichia coli O139:H28 (strain E24377A / ETEC).